The primary structure comprises 37 residues: Large ribosomal subunit protein bL36 (37 aa).

It belongs to the bacterial ribosomal protein bL36 family.

The polypeptide is Large ribosomal subunit protein bL36 (Campylobacter jejuni subsp. jejuni serotype O:6 (strain 81116 / NCTC 11828)).